The primary structure comprises 301 residues: Rhodopsin (301 aa).

At 1–18 (LHMIHLHWYQYPPMNPMM) the chain is on the extracellular side. A helical membrane pass occupies residues 19-43 (YPLLLIFMLFTGILCLAGNFVTIWV). Residues 44-55 (FMNTKSLRTPAN) lie on the Cytoplasmic side of the membrane. Residues 56–78 (LLVVNLAMSDFLMMFTMFPPMMV) traverse the membrane as a helical segment. Over 79 to 92 (TCYYHTWTLGPTFC) the chain is Extracellular. Cys-92 and Cys-169 form a disulfide bridge. Residues 93–115 (QVYGFLGNLCGCASIWTMVFITF) traverse the membrane as a helical segment. The 'Ionic lock' involved in activated form stabilization motif lies at 116-118 (DRY). The Cytoplasmic portion of the chain corresponds to 116 to 134 (DRYNVIVKGVAGEPLSTKK). Residues 135–155 (ASLWILIVWVLSLAWCMAPFF) traverse the membrane as a helical segment. The Extracellular segment spans residues 156–182 (GWNRYVPEGNLTGCGTDYLSEDILSRS). A glycan (N-linked (GlcNAc...) asparagine) is linked at Asn-165. Residues 183-204 (YLYIYSTWVYFLPLTITIYCYV) traverse the membrane as a helical segment. Residues 205-245 (FIIKAVAAHEKGMRDQAKKMGIKSLRNEEAQKTSAECRLAK) lie on the Cytoplasmic side of the membrane. A helical transmembrane segment spans residues 246-267 (IAMTTVALWFIAWTPYLLINWV). Topologically, residues 268-278 (GMFARSYLSPV) are extracellular. The helical transmembrane segment at 279–300 (YTIWGYVFAKANAVYNPIVYAI) threads the bilayer. The residue at position 288 (Lys-288) is an N6-(retinylidene)lysine.

The protein belongs to the G-protein coupled receptor 1 family. Opsin subfamily. In terms of assembly, homodimer. Interacts with GNAQ. Contains one covalently linked retinal chromophore.

It localises to the cell projection. Its subcellular location is the rhabdomere membrane. Functionally, photoreceptor required for image-forming vision at low light intensity. Can use both retinal and 3-dehydroretinal as visual pigment. Light-induced isomerization of 11-cis to all-trans retinal triggers a conformational change that activates signaling via G-proteins. Signaling via GNAQ probably mediates the activation of phospholipase C. The sequence is that of Rhodopsin (RHO) from Procambarus milleri (Miami cave crayfish).